Reading from the N-terminus, the 781-residue chain is MRFKNVKKTALMLAMFGMATSSNAALFDYNATGDTEFDSPAKQGWMQDNTNNGSGVLTNADGMPAWLVQGIGGRAQWTYSLSTNQHAQASSFGWRMTTEMKVLSGGMITNYYANGTQRVLPIISLDSSGNLVVEFEGQTGRTVLATGTAATEYHKFELVFLPGSNPSASFYFDGKLIRDNIQPTASKQNMIVWGNGSSNTDGVAAYRDIKFEIQGDVIFRGPDRIPSIVASSVTPGVVTAFAEKRVGGGDPGALSNTNDIITRTSRDGGITWDTELNLTEQINVSDEFDFSDPRPIYDPSSNTVLVSYARWPTDAAQNGDRIKPWMPNGIFYSVYDVASGNWQAPIDVTDQVKERSFQIAGWGGSELYRRNTSLNSQQDWQSNAKIRIVDGAANQIQVADGSRKYVVTLSIDESGGLVANLNGVSAPIILQSEHAKVHSFHDYELQYSALNHTTTLFVDGQQITTWAGEVSQENNIQFGNADAQIDGRLHVQKIVLTQQGHNLVEFDAFYLAQQTPEVEKDLEKLGWTKIKTGNTMSLYGNASVNPGPGHGITLTRQQNISGSQNGRLIYPAIVLDRFFLNVMSIYSDDGGSNWQTGSTLPIPFRWKSSSILETLEPSEADMVELQNGDLLLTARLDFNQIVNGVNYSPRQQFLSKDGGITWSLLEANNANVFSNISTGTVDASITRFEQSDGSHFLLFTNPQGNPAGTNGRQNLGLWFSFDEGVTWKGPIQLVNGASAYSDIYQLDSENAIVIVETDNSNMRILRMPITLLKQKLTLSQN.

The signal sequence occupies residues 1 to 24; that stretch reads MRFKNVKKTALMLAMFGMATSSNA. A substrate-binding site is contributed by R224. D250 functions as the Proton acceptor in the catalytic mechanism. BNR repeat units lie at residues 263–274 and 585–596; these read RTSRDGGITWDT and IYSDDGGSNWQT. E619 is a catalytic residue. R635 serves as a coordination point for substrate. The stretch at 653-664 is one BNR 3 repeat; sequence FLSKDGGITWSL. R712 lines the substrate pocket. Residues 718–729 form a BNR 4 repeat; the sequence is WFSFDEGVTWKG. Y740 (nucleophile) is an active-site residue.

The protein belongs to the glycosyl hydrolase 33 family. In terms of assembly, monomer. Ca(2+) is required as a cofactor.

It localises to the secreted. The enzyme catalyses Hydrolysis of alpha-(2-&gt;3)-, alpha-(2-&gt;6)-, alpha-(2-&gt;8)- glycosidic linkages of terminal sialic acid residues in oligosaccharides, glycoproteins, glycolipids, colominic acid and synthetic substrates.. Its function is as follows. Cleaves the terminal sialic acid (N-acetyl neuraminic acid) from carbohydrate chains in glycoproteins providing free sialic acid which can be used as carbon and energy sources. Sialidases have been suggested to be pathogenic factors in microbial infections. Facilitates cholera toxin binding to host intestinal epithelial cells by converting cell surface polysialogangliosides to GM1 monogangliosides. The chain is Sialidase (nanH) from Vibrio cholerae serotype O1 (strain ATCC 39541 / Classical Ogawa 395 / O395).